A 345-amino-acid polypeptide reads, in one-letter code: Phosphate acyltransferase (345 aa).

Belongs to the PlsX family. In terms of assembly, homodimer. Probably interacts with PlsY.

The protein resides in the cytoplasm. It catalyses the reaction a fatty acyl-[ACP] + phosphate = an acyl phosphate + holo-[ACP]. It functions in the pathway lipid metabolism; phospholipid metabolism. Catalyzes the reversible formation of acyl-phosphate (acyl-PO(4)) from acyl-[acyl-carrier-protein] (acyl-ACP). This enzyme utilizes acyl-ACP as fatty acyl donor, but not acyl-CoA. The protein is Phosphate acyltransferase of Limosilactobacillus fermentum (strain NBRC 3956 / LMG 18251) (Lactobacillus fermentum).